The sequence spans 675 residues: Transmembrane protein 232 (675 aa).

The helical transmembrane segment at 163-183 (LVKIGYLIFLRLFVFFLHGHL) threads the bilayer. Residues 598–634 (WQKDMEARKREEEAYKAQNQKDKEEKEKIHFQEIMKQ) are a coiled coil. Residues 605 to 624 (RKREEEAYKAQNQKDKEEKE) form a disordered region.

As to expression, high expression in the testis and weak expression levels in the spleen, liver, brain, uterus, lung, epididymis and kidney. Not detected in the heart or ovary.

Its subcellular location is the membrane. In terms of biological role, plays a critical role for male fertility and sperm motility by regulating sperm cytoplasm removal and maintaining axoneme integrity. This chain is Transmembrane protein 232 (Tmem232), found in Mus musculus (Mouse).